Reading from the N-terminus, the 299-residue chain is MQENSRLRIAIQKSGRLSKDSIALLESIGVKLRIHDQSLIAFSTNLPIDLLRVRDDDIPGLIFDGVVDLGIVGENVLEENELERKSKNENADFIMLKKLDFGGCRLSLALPENSEYKGVESFKNLRIATSYPQLLKRFMEENNIPYKTCMLTGSVEVAPSANLADGICDLVSSGATLKANGLKEVMVIYKSKACIIQRKESLVSHKQELIDKLLIRINGVMQARESKYIMLHAPIEKLEKITALLPGVEKPTILPLENDKARVALHMVSQENLFWETMEALKKEGASAILVLPIEKMLS.

This sequence belongs to the ATP phosphoribosyltransferase family. Long subfamily. Mg(2+) serves as cofactor.

It localises to the cytoplasm. The catalysed reaction is 1-(5-phospho-beta-D-ribosyl)-ATP + diphosphate = 5-phospho-alpha-D-ribose 1-diphosphate + ATP. The protein operates within amino-acid biosynthesis; L-histidine biosynthesis; L-histidine from 5-phospho-alpha-D-ribose 1-diphosphate: step 1/9. Feedback inhibited by histidine. Functionally, catalyzes the condensation of ATP and 5-phosphoribose 1-diphosphate to form N'-(5'-phosphoribosyl)-ATP (PR-ATP). Has a crucial role in the pathway because the rate of histidine biosynthesis seems to be controlled primarily by regulation of HisG enzymatic activity. The sequence is that of ATP phosphoribosyltransferase from Campylobacter lari (strain RM2100 / D67 / ATCC BAA-1060).